Consider the following 520-residue polypeptide: MNDASSDPGIPGRPGDVVAAAAPREVGALVFRPLEIDTWQEHVIYMHPDCPVCRAEGFSAQARVRVQIGDRSLIATLTLLGAPLLNTGEASLSLSAARTLSARAGDVVHVTHAPALESVRALRAKIYGCHLDSVQLDGIIGDISAGRYADVHIAAFLTACADGRMSLRETVDLTRAMVRSGQRLNWDREVVADKHCVGGLPGNRTTPVVVAIAAAAGLLLPKTSSRAITSPAGTADTMEALTRVTLDSTELRRVVEQVGAALVWGGALSLSPADDVLIRVERALDIDSDAQLVASILSKKIAAGSTHVLIDVPVGPTAKIREDSDLARLDLAMTKVADAFGLKLRILRTDGSQPVGRGVGPALEALDVLAVLQCQPTAPADLRERSLLLAGELLEFCGAIPPGQGRLLAGSLLDSGAAWARFQAICEAQGGLRTPGQAVFRRDVVAARSGIVTSVDNRHVARTAKLAGAPRRQVAGLELHVRAGDEVVAGAPLCTLHAQASGELEYAFSYALAHDPFRIE.

The protein belongs to the thymidine/pyrimidine-nucleoside phosphorylase family. Type 2 subfamily.

It carries out the reaction thymidine + phosphate = 2-deoxy-alpha-D-ribose 1-phosphate + thymine. This Cupriavidus necator (strain ATCC 17699 / DSM 428 / KCTC 22496 / NCIMB 10442 / H16 / Stanier 337) (Ralstonia eutropha) protein is Putative thymidine phosphorylase 1.